The primary structure comprises 675 residues: Electrogenic aspartate/glutamate antiporter SLC25A13, mitochondrial (675 aa).

Ala-2 is modified (N-acetylalanine). A regulatory N-terminal domain region spans residues 2–295 (AAAKVALTKR…TLADIERIAP (294 aa)). The Mitochondrial intermembrane segment spans residues 2-331 (AAAKVALTKR…LLQVAESAYR (330 aa)). EF-hand domains are found at residues 51–86 (SQPN…SVLC), 87–122 (APDA…TTIH), 125–157 (IPFN…FLLE), and 158–193 (IQLE…IRPH). Ca(2+) contacts are provided by Asp-66, Thr-68, Asp-70, Leu-72, and Glu-77. Residues 296–311 (LEEGTLPFNLAEAQRQ) are linker loop domain. The interval 321–612 (VLLQVAESAY…LQRWFYIDFG (292 aa)) is carrier domain. Solcar repeat units lie at residues 326–418 (AESA…VRDK), 426–510 (VPLA…VKAS), and 518–606 (VSPG…LQRW). Residues 332-349 (FGLGSVAGAVGATAVYPI) traverse the membrane as a helical segment. The Mitochondrial matrix segment spans residues 350-392 (DLVKTRMQNQRSTGSFVGELMYKNSFDCFKKVLRYEGFFGLYR). Lys-353 and Lys-372 each carry N6-acetyllysine. Residues 393 to 412 (GLLPQLLGVAPEKAIKLTVN) form a helical membrane-spanning segment. Residues 413 to 435 (DFVRDKFMHKDGSVPLAAEILAG) lie on the Mitochondrial intermembrane side of the membrane. The chain crosses the membrane as a helical span at residues 436–449 (GCAGGSQVIFTNPL). Over 450-484 (EIVKIRLQVAGEITTGPRVSALSVVRDLGFFGIYK) the chain is Mitochondrial matrix. Lys-453 is modified (N6-methyllysine). Lys-484 carries the N6-acetyllysine; alternate modification. At Lys-484 the chain carries N6-succinyllysine; alternate. The chain crosses the membrane as a helical span at residues 485–504 (GAKACFLRDIPFSAIYFPCY). The Mitochondrial intermembrane segment spans residues 505-523 (AHVKASFANEDGQVSPGSL). The helical transmembrane segment at 524–541 (LLAGAIAGMPAASLVTPA) threads the bilayer. Residues 542-580 (DVIKTRLQVAARAGQTTYSGVIDCFRKILREEGPKALWK) are Mitochondrial matrix-facing. At Lys-580 the chain carries N6-succinyllysine. The chain crosses the membrane as a helical span at residues 581–600 (GAGARVFRSSPQFGVTLLTY). Over 601-675 (ELLQRWFYID…STSKAIGGGP (75 aa)) the chain is Mitochondrial intermembrane. The segment at 613–675 (GVKPMGSEPV…STSKAIGGGP (63 aa)) is C-terminal domain. At Lys-662 the chain carries N6-acetyllysine. Residue Ser-666 is modified to Phosphoserine.

The protein belongs to the mitochondrial carrier (TC 2.A.29) family. In terms of assembly, homodimer (via N-terminus). In terms of tissue distribution, high levels in liver and low levels in kidney, pancreas, placenta, heart and brain.

The protein localises to the mitochondrion inner membrane. The catalysed reaction is L-aspartate(in) + L-glutamate(out) + H(+)(out) = L-aspartate(out) + L-glutamate(in) + H(+)(in). It carries out the reaction 3-sulfino-L-alanine(out) + L-glutamate(in) + H(+)(in) = 3-sulfino-L-alanine(in) + L-glutamate(out) + H(+)(out). It catalyses the reaction 3-sulfino-L-alanine(out) + L-aspartate(in) = 3-sulfino-L-alanine(in) + L-aspartate(out). Its activity is regulated as follows. Activated by calcium-binding in the mitochondrial intermembrane space. Inhibited by pyridoxal 5'-phosphate, bathophenathroline, mercurials, diethyl pyrocarbonate and N-ethylmaleimide. In terms of biological role, mitochondrial electrogenic aspartate/glutamate antiporter that favors efflux of aspartate and entry of glutamate and proton within the mitochondria as part of the malate-aspartate shuttle. Also mediates the uptake of L-cysteinesulfinate (3-sulfino-L-alanine) by mitochondria in exchange of L-glutamate and proton. Can also exchange L-cysteinesulfinate with aspartate in their anionic form without any proton translocation. Lacks transport activity towards gamma-aminobutyric acid (GABA). This is Electrogenic aspartate/glutamate antiporter SLC25A13, mitochondrial from Homo sapiens (Human).